A 217-amino-acid chain; its full sequence is Adenylate kinase (217 aa).

10-15 (GAGKGT) lines the ATP pocket. An NMP region spans residues 30 to 59 (STGDMFRAAMKEETQLGLEAKSFIDKGELV). Residues Thr-31, Arg-36, 57–59 (ELV), 85–88 (GFPR), and Gln-92 contribute to the AMP site. Residues 126-163 (GRRICKNCGATYHLVFNPPAKENVCDKCGGELYQRADD) are LID. Arg-127 serves as a coordination point for ATP. Zn(2+) is bound by residues Cys-130 and Cys-133. Position 136 to 137 (136 to 137 (TY)) interacts with ATP. 2 residues coordinate Zn(2+): Cys-150 and Cys-153. Residues Arg-160 and Arg-171 each coordinate AMP. Residue Lys-199 coordinates ATP.

Belongs to the adenylate kinase family. As to quaternary structure, monomer.

It localises to the cytoplasm. The catalysed reaction is AMP + ATP = 2 ADP. Its pathway is purine metabolism; AMP biosynthesis via salvage pathway; AMP from ADP: step 1/1. Its function is as follows. Catalyzes the reversible transfer of the terminal phosphate group between ATP and AMP. Plays an important role in cellular energy homeostasis and in adenine nucleotide metabolism. The polypeptide is Adenylate kinase (Bacillus pumilus (strain SAFR-032)).